We begin with the raw amino-acid sequence, 300 residues long: Geranylgeranyl pyrophosphate synthase (300 aa).

M1 is modified (N-acetylmethionine). 3 residues coordinate isopentenyl diphosphate: K25, R28, and H57. Mg(2+)-binding residues include D64 and D68. R73 provides a ligand contact to dimethylallyl diphosphate. Residue R74 coordinates isopentenyl diphosphate. Dimethylallyl diphosphate-binding residues include K151, T152, Q185, K202, and K212.

The protein belongs to the FPP/GGPP synthase family. Homohexamer; trimer of homodimers. It depends on Mg(2+) as a cofactor.

The protein localises to the cytoplasm. The protein resides in the perinuclear region. Its subcellular location is the myofibril. It is found in the sarcomere. It localises to the z line. It catalyses the reaction isopentenyl diphosphate + dimethylallyl diphosphate = (2E)-geranyl diphosphate + diphosphate. It carries out the reaction isopentenyl diphosphate + (2E)-geranyl diphosphate = (2E,6E)-farnesyl diphosphate + diphosphate. The catalysed reaction is isopentenyl diphosphate + (2E,6E)-farnesyl diphosphate = (2E,6E,10E)-geranylgeranyl diphosphate + diphosphate. It participates in isoprenoid biosynthesis; farnesyl diphosphate biosynthesis; farnesyl diphosphate from geranyl diphosphate and isopentenyl diphosphate: step 1/1. It functions in the pathway isoprenoid biosynthesis; geranyl diphosphate biosynthesis; geranyl diphosphate from dimethylallyl diphosphate and isopentenyl diphosphate: step 1/1. The protein operates within isoprenoid biosynthesis; geranylgeranyl diphosphate biosynthesis; geranylgeranyl diphosphate from farnesyl diphosphate and isopentenyl diphosphate: step 1/1. Functionally, catalyzes the trans-addition of the three molecules of IPP onto DMAPP to form geranylgeranyl pyrophosphate, an important precursor of carotenoids and geranylated proteins. This chain is Geranylgeranyl pyrophosphate synthase (GGPS1), found in Bos taurus (Bovine).